Reading from the N-terminus, the 129-residue chain is Small ribosomal subunit protein uS9 (129 aa).

A disordered region spans residues 107–129 (SRTVERKKYGRRKARRSPQFSKR). A compositionally biased stretch (basic residues) spans 114–129 (KYGRRKARRSPQFSKR).

The protein belongs to the universal ribosomal protein uS9 family.

The protein is Small ribosomal subunit protein uS9 of Campylobacter jejuni subsp. jejuni serotype O:23/36 (strain 81-176).